Here is a 514-residue protein sequence, read N- to C-terminus: Endoglucanase MaCel5A (514 aa).

The first 23 residues, Met-1 to Ala-23, serve as a signal peptide directing secretion. 2 stretches are compositionally biased toward low complexity: residues Gly-91–Gly-114 and Ser-179–Gly-201. 2 disordered regions span residues Gly-91 to Gly-118 and Ser-179 to Ser-208. The active-site Proton donor is the Glu-346. Catalysis depends on Glu-439, which acts as the Nucleophile.

This sequence belongs to the glycosyl hydrolase 5 (cellulase A) family.

It carries out the reaction Endohydrolysis of (1-&gt;4)-beta-D-glucosidic linkages in cellulose, lichenin and cereal beta-D-glucans.. Exhibits strong halostability and halotolerance. The activity increases about tenfold in the presence of 0.5 M NaCl, and about fivefold in the presence of 4.0 M NaCl. Tolerates detergents, but activity is decreased in the presence of EDTA. Activity is enhanced in the presence of Mn(2+), Ca(2+), Ba(2+) or Mg(2+), and decreased in the presence of Zn(2+), Cu(2+), Al(3+) or Fe(3+). Its function is as follows. Endoglucanase that exhibits highest activity toward barley beta-glucan, lower activity toward carboxymethyl cellulose (CMC-Na), and marginal activity toward laminarin and xylan. The chain is Endoglucanase MaCel5A from Microbulbifer sp. (strain ALW1).